The sequence spans 326 residues: Undecaprenyl-phosphate 4-deoxy-4-formamido-L-arabinose transferase (326 aa).

2 helical membrane passes run 236 to 256 (LSVV…LLIV) and 270 to 290 (VFTL…AMGL).

Belongs to the glycosyltransferase 2 family.

Its subcellular location is the cell inner membrane. The catalysed reaction is UDP-4-deoxy-4-formamido-beta-L-arabinose + di-trans,octa-cis-undecaprenyl phosphate = 4-deoxy-4-formamido-alpha-L-arabinopyranosyl di-trans,octa-cis-undecaprenyl phosphate + UDP. It functions in the pathway glycolipid biosynthesis; 4-amino-4-deoxy-alpha-L-arabinose undecaprenyl phosphate biosynthesis; 4-amino-4-deoxy-alpha-L-arabinose undecaprenyl phosphate from UDP-4-deoxy-4-formamido-beta-L-arabinose and undecaprenyl phosphate: step 1/2. The protein operates within bacterial outer membrane biogenesis; lipopolysaccharide biosynthesis. In terms of biological role, catalyzes the transfer of 4-deoxy-4-formamido-L-arabinose from UDP to undecaprenyl phosphate. The modified arabinose is attached to lipid A and is required for resistance to polymyxin and cationic antimicrobial peptides. The sequence is that of Undecaprenyl-phosphate 4-deoxy-4-formamido-L-arabinose transferase from Proteus mirabilis (strain HI4320).